Reading from the N-terminus, the 299-residue chain is tRNA dimethylallyltransferase (299 aa).

Position 11–18 (11–18 (GPTAVGKT)) interacts with ATP. 13–18 (TAVGKT) contacts substrate. Residues 36-39 (DSQQ) form an interaction with substrate tRNA region.

This sequence belongs to the IPP transferase family. As to quaternary structure, monomer. Mg(2+) is required as a cofactor.

It carries out the reaction adenosine(37) in tRNA + dimethylallyl diphosphate = N(6)-dimethylallyladenosine(37) in tRNA + diphosphate. Functionally, catalyzes the transfer of a dimethylallyl group onto the adenine at position 37 in tRNAs that read codons beginning with uridine, leading to the formation of N6-(dimethylallyl)adenosine (i(6)A). This is tRNA dimethylallyltransferase from Streptococcus pyogenes serotype M1.